A 360-amino-acid chain; its full sequence is Protein YIM1-1 (360 aa).

The protein belongs to the YIM1 family.

The protein resides in the lipid droplet. It is found in the mitochondrion. This Lachancea thermotolerans (strain ATCC 56472 / CBS 6340 / NRRL Y-8284) (Yeast) protein is Protein YIM1-1 (YIM1-1).